The sequence spans 433 residues: Monodehydroascorbate reductase (433 aa).

FAD contacts are provided by residues 12–15, E39, R46, K51, I94, and 145–146; these read GGVS and RE. Residues 170-176, E194, R200, and G259 contribute to the NAD(+) site; that span reads GGYIGLE. Residue 172-176 coordinates NADP(+); sequence YIGLE. Residues R200 and G259 each coordinate NADP(+). Position 296 (D296) interacts with FAD. 312–313 lines the NAD(+) pocket; it reads EH. 312-313 provides a ligand contact to NADP(+); it reads EH. Position 314 (V314) interacts with FAD. R318 provides a ligand contact to L-ascorbate. Y347 contacts FAD. Y347 contributes to the NAD(+) binding site. Position 347 (Y347) interacts with NADP(+). An L-ascorbate-binding site is contributed by R349.

The protein belongs to the FAD-dependent oxidoreductase family. FAD is required as a cofactor. In terms of tissue distribution, expressed at relatively low levels in all tissues examined.

The protein resides in the cytoplasm. It carries out the reaction 2 monodehydro-L-ascorbate radical + NADH + H(+) = 2 L-ascorbate + NAD(+). Its function is as follows. Catalyzes the conversion of monodehydroascorbate to ascorbate, oxidizing NADH in the process. This chain is Monodehydroascorbate reductase, found in Pisum sativum (Garden pea).